The primary structure comprises 245 residues: Probable phosphatase PMI1003 (245 aa).

Residues H7, H9, H15, H40, E73, H101, H131, D192, and H194 each coordinate Zn(2+).

It belongs to the PHP family. As to quaternary structure, homotrimer. It depends on Zn(2+) as a cofactor.

In Proteus mirabilis (strain HI4320), this protein is Probable phosphatase PMI1003.